Here is a 237-residue protein sequence, read N- to C-terminus: NAD-dependent protein deacylase (237 aa).

In terms of domain architecture, Deacetylase sirtuin-type spans 1 to 235 (MRIAVLSGAG…PGLLQRLPAL (235 aa)). 8-28 (GAGISAESGVPTFRDDKNGLW) is an NAD(+) binding site. Y53 and R56 together coordinate substrate. Position 86 to 89 (86 to 89 (QNVD)) interacts with NAD(+). Residue H104 is the Proton acceptor of the active site. 4 residues coordinate Zn(2+): C112, C115, C138, and C140. Residues 177–179 (GTS), 203–205 (NPE), and A221 each bind NAD(+).

Belongs to the sirtuin family. Class III subfamily. Requires Zn(2+) as cofactor.

It localises to the cytoplasm. The catalysed reaction is N(6)-acetyl-L-lysyl-[protein] + NAD(+) + H2O = 2''-O-acetyl-ADP-D-ribose + nicotinamide + L-lysyl-[protein]. It catalyses the reaction N(6)-succinyl-L-lysyl-[protein] + NAD(+) + H2O = 2''-O-succinyl-ADP-D-ribose + nicotinamide + L-lysyl-[protein]. Its function is as follows. NAD-dependent lysine deacetylase and desuccinylase that specifically removes acetyl and succinyl groups on target proteins. Modulates the activities of several proteins which are inactive in their acylated form. The polypeptide is NAD-dependent protein deacylase (Mycolicibacterium paratuberculosis (strain ATCC BAA-968 / K-10) (Mycobacterium paratuberculosis)).